The following is a 559-amino-acid chain: 2-isopropylmalate synthase (559 aa).

The 275-residue stretch at 33 to 307 (PIWCSSDLRD…NPELDFSDID (275 aa)) folds into the Pyruvate carboxyltransferase domain. Positions 42, 246, 248, and 282 each coordinate Mg(2+). A regulatory domain region spans residues 439–559 (ANTPYALVSH…SLSEQQAKAA (121 aa)).

It belongs to the alpha-IPM synthase/homocitrate synthase family. LeuA type 2 subfamily. Homodimer. Requires Mg(2+) as cofactor.

The protein resides in the cytoplasm. The catalysed reaction is 3-methyl-2-oxobutanoate + acetyl-CoA + H2O = (2S)-2-isopropylmalate + CoA + H(+). It participates in amino-acid biosynthesis; L-leucine biosynthesis; L-leucine from 3-methyl-2-oxobutanoate: step 1/4. In terms of biological role, catalyzes the condensation of the acetyl group of acetyl-CoA with 3-methyl-2-oxobutanoate (2-ketoisovalerate) to form 3-carboxy-3-hydroxy-4-methylpentanoate (2-isopropylmalate). This Pseudomonas fluorescens (strain ATCC BAA-477 / NRRL B-23932 / Pf-5) protein is 2-isopropylmalate synthase.